The primary structure comprises 113 residues: MAKPKIKFVPDSLHVKTGDIVYVISGKDKKMTGKVLKVFPKKGKIIVEGINIVTKHLKPSQVNPQGGVVQKEAAIFSSKVMLFDEKTKSPTRVGYEVRDGKKVRISKKSGEII.

It belongs to the universal ribosomal protein uL24 family. In terms of assembly, part of the 50S ribosomal subunit.

One of two assembly initiator proteins, it binds directly to the 5'-end of the 23S rRNA, where it nucleates assembly of the 50S subunit. Functionally, one of the proteins that surrounds the polypeptide exit tunnel on the outside of the subunit. The protein is Large ribosomal subunit protein uL24 (rplX) of Fusobacterium nucleatum subsp. nucleatum (strain ATCC 25586 / DSM 15643 / BCRC 10681 / CIP 101130 / JCM 8532 / KCTC 2640 / LMG 13131 / VPI 4355).